A 160-amino-acid polypeptide reads, in one-letter code: Serine-protein kinase RsbW (160 aa).

It belongs to the anti-sigma-factor family.

The enzyme catalyses L-seryl-[protein] + ATP = O-phospho-L-seryl-[protein] + ADP + H(+). The catalysed reaction is L-threonyl-[protein] + ATP = O-phospho-L-threonyl-[protein] + ADP + H(+). Its function is as follows. Negative regulator of sigma-B activity. Phosphorylates and inactivates its specific antagonist protein, RsbV. Upon phosphorylation of RsbV, RsbW is released and binds to sigma-B, thereby blocking its ability to form an RNA polymerase holoenzyme (E-sigma-B). This is Serine-protein kinase RsbW from Bacillus mycoides (strain KBAB4) (Bacillus weihenstephanensis).